The primary structure comprises 415 residues: MARGKNHPDGEEEEAPAAAGEEEAPVEMDEEGEMEEEEEEEQGEGEGEERDEGEEEEEWEDAEEVEGGEESEQAAAEEEDSPLVVVEAEAAAPVVDGSPPKLAEGYYEIEDIRRRRLRKGKLQYLVKWRGWPESANTWEPLENLSACSDIIDAFEMRLQSPRPGRKRKRKITTTPVAGSNPSHGKRGRPRLDAKSHTRAPAPEPKQLPCRTSCRRATNCSSKTVAGLDASGSVVRNQLAQNIVQEGSSSVISRTPCQELPLSIRLTDQQNEHHLVNGSSNSENLVKVPPSQGGQVTGAKKRKSGNVRRFEQNKPTQGQGECGALVVAEDVGSTEGETGDKKKTEGCPNRVHITKIIKPVRFAAAVNNDVQQVSITFKALRSDGQEVMVDDKELKANNPLLLISYYEQCLRYNPTS.

Disordered regions lie at residues 1–102 (MARG…PPKL), 158–209 (LQSP…QLPC), and 273–318 (HLVN…TQGQ). Acidic residues predominate over residues 10–81 (GEEEEAPAAA…EQAAAEEEDS (72 aa)). Positions 84-95 (VVVEAEAAAPVV) are enriched in low complexity. In terms of domain architecture, Chromo 1 spans 107-166 (YEIEDIRRRRLRKGKLQYLVKWRGWPESANTWEPLENLSACSDIIDAFEMRLQSPRPGRK). Over residues 172-182 (TTTPVAGSNPS) the composition is skewed to polar residues. Positions 348–412 (NRVHITKIIK…SYYEQCLRYN (65 aa)) constitute a Chromo 2; shadow subtype domain.

In terms of assembly, homodimer.

The protein localises to the nucleus. In terms of biological role, structural component of heterochromatin involved in gene repression. Recognizes and binds histone H3 tails methylated at 'Lys-9', leading to epigenetic repression. The chain is Probable chromo domain-containing protein LHP1 (LHP1) from Oryza sativa subsp. japonica (Rice).